A 220-amino-acid chain; its full sequence is Ribosomal RNA large subunit methyltransferase E (220 aa).

Residues G60, W62, D92, D108, and D133 each coordinate S-adenosyl-L-methionine. K173 (proton acceptor) is an active-site residue. The segment at 198–220 (KPKASRDKSSETFILGRQLKHPR) is disordered.

The protein belongs to the class I-like SAM-binding methyltransferase superfamily. RNA methyltransferase RlmE family.

It is found in the cytoplasm. It carries out the reaction uridine(2552) in 23S rRNA + S-adenosyl-L-methionine = 2'-O-methyluridine(2552) in 23S rRNA + S-adenosyl-L-homocysteine + H(+). Functionally, specifically methylates the uridine in position 2552 of 23S rRNA at the 2'-O position of the ribose in the fully assembled 50S ribosomal subunit. This is Ribosomal RNA large subunit methyltransferase E from Burkholderia cenocepacia (strain HI2424).